The chain runs to 182 residues: Ribosome-recycling factor (182 aa).

It belongs to the RRF family.

It localises to the cytoplasm. In terms of biological role, responsible for the release of ribosomes from messenger RNA at the termination of protein biosynthesis. May increase the efficiency of translation by recycling ribosomes from one round of translation to another. This chain is Ribosome-recycling factor, found in Mycoplasma capricolum subsp. capricolum (strain California kid / ATCC 27343 / NCTC 10154).